Here is a 169-residue protein sequence, read N- to C-terminus: Protein YABBY 7 (169 aa).

The C4-type zinc-finger motif lies at 21–48; that stretch reads CSFCATVLLVSVPCSSVLRVVAVQCGHC. A disordered region spans residues 63–122; the sequence is SASIELTPQELDAGPPPGEYSDESSGDDREGRDAEDDAPAPAAAAVANKPPGRKQRTPSA.

Belongs to the YABBY family. Expressed in leaf sheaths and flowers.

The protein localises to the nucleus. This is Protein YABBY 7 (YAB7) from Oryza sativa subsp. japonica (Rice).